The chain runs to 778 residues: Lon protease (778 aa).

Residues Leu8 to Leu202 enclose the Lon N-terminal domain. Position 354–361 (Gly354–Thr361) interacts with ATP. Residues Glu591–Gly772 form the Lon proteolytic domain. Active-site residues include Ser678 and Lys721.

Belongs to the peptidase S16 family. Homohexamer. Organized in a ring with a central cavity.

It localises to the cytoplasm. It catalyses the reaction Hydrolysis of proteins in presence of ATP.. Its function is as follows. ATP-dependent serine protease that mediates the selective degradation of mutant and abnormal proteins as well as certain short-lived regulatory proteins. Required for cellular homeostasis and for survival from DNA damage and developmental changes induced by stress. Degrades polypeptides processively to yield small peptide fragments that are 5 to 10 amino acids long. Binds to DNA in a double-stranded, site-specific manner. This chain is Lon protease, found in Clostridium acetobutylicum (strain ATCC 824 / DSM 792 / JCM 1419 / IAM 19013 / LMG 5710 / NBRC 13948 / NRRL B-527 / VKM B-1787 / 2291 / W).